The primary structure comprises 402 residues: Glutamate N-acetyltransferase (402 aa).

The substrate site is built by threonine 151, lysine 178, threonine 189, glutamate 267, asparagine 397, and threonine 402. The Nucleophile role is filled by threonine 189.

It belongs to the ArgJ family. In terms of assembly, heterotetramer of two alpha and two beta chains.

The protein resides in the cytoplasm. It catalyses the reaction N(2)-acetyl-L-ornithine + L-glutamate = N-acetyl-L-glutamate + L-ornithine. It participates in amino-acid biosynthesis; L-arginine biosynthesis; L-ornithine and N-acetyl-L-glutamate from L-glutamate and N(2)-acetyl-L-ornithine (cyclic): step 1/1. Catalyzes the transfer of the acetyl group from N(2)-acetylornithine to glutamate, forming N-acetylglutamate and L-ornithine. In Methanothermobacter thermautotrophicus (strain ATCC 29096 / DSM 1053 / JCM 10044 / NBRC 100330 / Delta H) (Methanobacterium thermoautotrophicum), this protein is Glutamate N-acetyltransferase.